The chain runs to 152 residues: MIQMDNSALQKLTETISLKYFKMPFKHKAYFNKRLRTTGGRYLLSSHNIEVNEKQFAKFGESAIIDIIKHELCHYHLHLQKKGYQHKDKDFKRLCQQTGAPRFCSAIEKYEDRVNYIYQCQKCASRFPRIRKVDTNKMVCGKCNGKLKELNN.

One can recognise a SprT-like domain in the interval 9–149 (LQKLTETISL…CGKCNGKLKE (141 aa)). A Zn(2+)-binding site is contributed by H70. Residue E71 is part of the active site. H74 is a binding site for Zn(2+).

The protein belongs to the SprT family. Zn(2+) is required as a cofactor.

Its subcellular location is the cytoplasm. The sequence is that of Protein SprT-like from Staphylococcus saprophyticus subsp. saprophyticus (strain ATCC 15305 / DSM 20229 / NCIMB 8711 / NCTC 7292 / S-41).